The primary structure comprises 441 residues: uncharacterized protein (441 aa).

11 consecutive transmembrane segments (helical) span residues 68–88, 110–130, 131–151, 164–184, 194–214, 229–246, 260–280, 287–307, 337–357, 384–404, and 412–432; these read MAIAGAFAVLFLPYSLLGPFA, ALIAGVGTILAVGAGDVPLLV, GALVANGLARFVASGLSAALP, SVAIASGAVSAFLGANFMLLP, GASAIVFLVAIPVSIALLWSL, AIHGSAVYAVVTGWLHGA, SGLAAHRMVVGINSLLILLLV, AVGGLGTALLFFAATGLGAFL, VAAAGLLVPVMVVCGFLLGVA, VQDALFWVSYILSITVAAALI, and VFVLFGSAIYLAGLVVHTIVG.

It belongs to the major facilitator superfamily.

It is found in the cell membrane. This is an uncharacterized protein from Mycobacterium tuberculosis (strain ATCC 25618 / H37Rv).